The primary structure comprises 391 residues: MAVKKRSIFEEVGQGAKAPVPQGGSIDRGHGGARRGIRLWLMALFLLVMAMIVVGGLTRLTDSGLSITEWRPVTGAVPPLNEAQWAAEFDKYRESPQYRLMNAGMTLAEFQRIYWWEWGHRQLGRVIGLVWAVGFLGFLAARRIPRGWWPRLLALGALGGLQGGIGWWMVASGLEGDKVTVESTRLATHLGLAFIILGLIAWQALLLGRSESDLLQARRQKEGRLVTLTTVLIGVAFLQIVLGALVAGIDAGRGFPTWPDMNGTFLPADMFYVPGVETDWRNPAWWLGLLQNPGFVQFLHRMAGYTLAALGLIFWIFGRRSRHRATRGAFDLLAMALLAQILLGVGTVLSAAEWQVAIAHQVGAVVIWVLILHARHLALYPRVGSIRKGTL.

8 helical membrane passes run 37–57 (IRLW…VGGL), 121–141 (RQLG…FLAA), 152–172 (LLAL…MVAS), 186–206 (LATH…QALL), 229–249 (TTVL…VAGI), 298–318 (FLHR…WIFG), 332–352 (LLAM…LSAA), and 354–374 (WQVA…ILHA). H300 contributes to the heme binding site. H360 provides a ligand contact to heme.

This sequence belongs to the COX15/CtaA family. Type 2 subfamily. Interacts with CtaB. The cofactor is heme b.

It localises to the cell membrane. The catalysed reaction is Fe(II)-heme o + 2 A + H2O = Fe(II)-heme a + 2 AH2. It participates in porphyrin-containing compound metabolism; heme A biosynthesis; heme A from heme O: step 1/1. In terms of biological role, catalyzes the conversion of heme O to heme A by two successive hydroxylations of the methyl group at C8. The first hydroxylation forms heme I, the second hydroxylation results in an unstable dihydroxymethyl group, which spontaneously dehydrates, resulting in the formyl group of heme A. This Cereibacter sphaeroides (strain ATCC 17029 / ATH 2.4.9) (Rhodobacter sphaeroides) protein is Heme A synthase.